A 400-amino-acid polypeptide reads, in one-letter code: Putative cytochrome P450 133B2 (400 aa).

Residue Cys-348 participates in heme binding.

It belongs to the cytochrome P450 family. The cofactor is heme.

In Xylella fastidiosa (strain 9a5c), this protein is Putative cytochrome P450 133B2 (cyp133B2).